A 337-amino-acid polypeptide reads, in one-letter code: DNA-directed RNA polymerase subunit alpha (337 aa).

The alpha N-terminal domain (alpha-NTD) stretch occupies residues 1–233 (MVREEVAVST…DLFIPFLHAE (233 aa)). Residues 266–337 (GIALKCIFID…FTIDLPKNKF (72 aa)) form an alpha C-terminal domain (alpha-CTD) region.

The protein belongs to the RNA polymerase alpha chain family. In terms of assembly, in plastids the minimal PEP RNA polymerase catalytic core is composed of four subunits: alpha, beta, beta', and beta''. When a (nuclear-encoded) sigma factor is associated with the core the holoenzyme is formed, which can initiate transcription.

It is found in the plastid. It localises to the chloroplast. It carries out the reaction RNA(n) + a ribonucleoside 5'-triphosphate = RNA(n+1) + diphosphate. Functionally, DNA-dependent RNA polymerase catalyzes the transcription of DNA into RNA using the four ribonucleoside triphosphates as substrates. The polypeptide is DNA-directed RNA polymerase subunit alpha (Liriodendron tulipifera (Tuliptree)).